Here is a 205-residue protein sequence, read N- to C-terminus: Thymidylate kinase (205 aa).

11 to 18 (GVEGSGKS) is an ATP binding site.

It belongs to the thymidylate kinase family.

It catalyses the reaction dTMP + ATP = dTDP + ADP. Phosphorylation of dTMP to form dTDP in both de novo and salvage pathways of dTTP synthesis. This is Thymidylate kinase from Ruthia magnifica subsp. Calyptogena magnifica.